The sequence spans 132 residues: Fatty acid-binding protein, liver (132 aa).

Val1 bears the N-acetylvaline mark. Tyr19 is modified (phosphotyrosine; by Tyr-kinases).

The protein belongs to the calycin superfamily. Fatty-acid binding protein (FABP) family.

The protein resides in the cytoplasm. FABPs are thought to play a role in the intracellular transport of long-chain fatty acids and their acyl-CoA esters. The polypeptide is Fatty acid-binding protein, liver (Ginglymostoma cirratum (Nurse shark)).